Reading from the N-terminus, the 760-residue chain is Golgin subfamily A member 5 (760 aa).

Over 1-727 (MSWFVDLAGK…IFLRRYPMAR (727 aa)) the chain is Cytoplasmic. Over residues 95 to 111 (VSSTTPLGSSSKASSNF) the composition is skewed to polar residues. Disordered stretches follow at residues 95–114 (VSST…FVRP), 126–216 (DFLN…SQAD), and 432–456 (TEEK…EYTK). A compositionally biased stretch (basic and acidic residues) spans 135-146 (QSEKKEVRRETV). Residues 148-166 (KAFSPTGVSAQSQMPTVSL) are compositionally biased toward polar residues. Over residues 174–201 (PSVTPTPSSTQGLSRNSSLGSLSSSSHS) the composition is skewed to low complexity. A coiled-coil region spans residues 249–668 (QGQEHVISNL…LQGGQNSASH (420 aa)). Polar residues predominate over residues 441 to 450 (LQQQAKSSRS). Residues 728–748 (VFVIIYMALLHLWVMIVLLTY) form a helical; Anchor for type IV membrane protein membrane-spanning segment. Over 749–760 (TPEMHHSHPDGR) the chain is Extracellular.

It is found in the golgi apparatus membrane. In terms of biological role, involved in maintaining Golgi structure. Stimulates the formation of Golgi stacks and ribbons. Involved in intra-Golgi retrograde transport. This Danio rerio (Zebrafish) protein is Golgin subfamily A member 5 (golga5).